Consider the following 207-residue polypeptide: Ribosomal RNA large subunit methyltransferase E (207 aa).

Residues Gly-60, Trp-62, Asp-80, Asp-96, and Asp-121 each coordinate S-adenosyl-L-methionine. Lys-161 functions as the Proton acceptor in the catalytic mechanism.

This sequence belongs to the class I-like SAM-binding methyltransferase superfamily. RNA methyltransferase RlmE family.

The protein resides in the cytoplasm. It carries out the reaction uridine(2552) in 23S rRNA + S-adenosyl-L-methionine = 2'-O-methyluridine(2552) in 23S rRNA + S-adenosyl-L-homocysteine + H(+). Its function is as follows. Specifically methylates the uridine in position 2552 of 23S rRNA at the 2'-O position of the ribose in the fully assembled 50S ribosomal subunit. In Marinobacter nauticus (strain ATCC 700491 / DSM 11845 / VT8) (Marinobacter aquaeolei), this protein is Ribosomal RNA large subunit methyltransferase E.